The chain runs to 156 residues: Small ribosomal subunit protein uS7 (156 aa).

Belongs to the universal ribosomal protein uS7 family. Part of the 30S ribosomal subunit. Contacts proteins S9 and S11.

One of the primary rRNA binding proteins, it binds directly to 16S rRNA where it nucleates assembly of the head domain of the 30S subunit. Is located at the subunit interface close to the decoding center, probably blocks exit of the E-site tRNA. This chain is Small ribosomal subunit protein uS7, found in Blochmanniella pennsylvanica (strain BPEN).